A 403-amino-acid polypeptide reads, in one-letter code: Na(+)/H(+) antiporter NhaH (403 aa).

The Cytoplasmic segment spans residues 1-6 (MHGFHD). The helical transmembrane segment at 7–27 (VFIQILLLLAISVSVIAIAKL) threads the bilayer. Topologically, residues 28 to 30 (LKE) are extracellular. A helical membrane pass occupies residues 31-51 (PDSIALVLVGLVLGLTELPII). Over 52 to 65 (EDAERYITQSEVFQ) the chain is Cytoplasmic. The chain crosses the membrane as a helical span at residues 66-86 (ATIISLFLPILLGDATLKLPF). At 87–98 (HHLFSQKKTVLG) the chain is on the extracellular side. The chain crosses the membrane as a helical span at residues 99-119 (LAFVGTFVSSICIGTAAYFLL). Topologically, residues 120 to 124 (DLPLA) are cytoplasmic. A helical membrane pass occupies residues 125-145 (VAFTFAALMSATDPISVLSIF). The Extracellular portion of the chain corresponds to 146 to 167 (KSLGVPQKMSTVMEGESLFNDG). Residues 168–188 (IAVVLFKIASIYLLTYMEMGW) traverse the membrane as a helical segment. Residues 189–195 (AGLGSGV) are Cytoplasmic-facing. The helical transmembrane segment at 196-216 (FLFLKFAIGGALVGLVLGYFF) threads the bilayer. Residues 217–218 (SQ) are Extracellular-facing. A helical membrane pass occupies residues 219-239 (VIRVFDDYPLEVAFSALLFFG). Residues 240–241 (SY) are Cytoplasmic-facing. Residues 242–262 (FIAEHFHTSGVIAVVVGGFVF) traverse the membrane as a helical segment. Residues 263–281 (GDYGAKIGMSKETKTNINT) are Extracellular-facing. The helical transmembrane segment at 282 to 302 (FWDSVTLIANALIFLMVGLEI) threads the bilayer. At 303-310 (RNIDLAGN) the chain is on the cytoplasmic side. A helical transmembrane segment spans residues 311 to 331 (WGVIVGAILIVLVGRTIAVYL). Topologically, residues 332–372 (GTGWVQELSSKERLLINWGGLRGSLSVALALSLPMDFAGRD) are extracellular. The chain crosses the membrane as a helical span at residues 373–393 (QVLLLTFSVVLFSLIVQGLTL). The Cytoplasmic portion of the chain corresponds to 394–403 (KPLIKKLGMI).

The protein belongs to the monovalent cation:proton antiporter 1 (CPA1) transporter (TC 2.A.36) family.

The protein resides in the cell membrane. Functionally, na(+)/H(+) antiporter that extrudes sodium in exchange for external protons. Can also transport lithium. This Halobacillus dabanensis protein is Na(+)/H(+) antiporter NhaH (nhaH).